A 332-amino-acid chain; its full sequence is Probable allantoicase (332 aa).

This sequence belongs to the allantoicase family.

It carries out the reaction allantoate + H2O = (S)-ureidoglycolate + urea. Its pathway is nitrogen metabolism; (S)-allantoin degradation; (S)-ureidoglycolate from allantoate (aminidohydrolase route): step 1/1. The polypeptide is Probable allantoicase (Pseudomonas aeruginosa (strain UCBPP-PA14)).